The following is a 102-amino-acid chain: UPF0235 protein Noc_3000 (102 aa).

This sequence belongs to the UPF0235 family.

This is UPF0235 protein Noc_3000 from Nitrosococcus oceani (strain ATCC 19707 / BCRC 17464 / JCM 30415 / NCIMB 11848 / C-107).